Consider the following 165-residue polypeptide: Phosphopantetheine adenylyltransferase (165 aa).

Substrate is bound at residue Ser-10. Residues Ser-10–Phe-11 and His-18 contribute to the ATP site. Substrate contacts are provided by Lys-42, Leu-74, and Arg-88. ATP contacts are provided by residues Gly-89–Arg-91, Glu-99, and Tyr-124–Ser-130.

The protein belongs to the bacterial CoaD family. As to quaternary structure, homohexamer. Requires Mg(2+) as cofactor.

The protein resides in the cytoplasm. The enzyme catalyses (R)-4'-phosphopantetheine + ATP + H(+) = 3'-dephospho-CoA + diphosphate. It participates in cofactor biosynthesis; coenzyme A biosynthesis; CoA from (R)-pantothenate: step 4/5. Functionally, reversibly transfers an adenylyl group from ATP to 4'-phosphopantetheine, yielding dephospho-CoA (dPCoA) and pyrophosphate. This is Phosphopantetheine adenylyltransferase from Anoxybacillus flavithermus (strain DSM 21510 / WK1).